Consider the following 423-residue polypeptide: Hydroxymethylglutaryl-CoA synthase-like protein AKT4-1 (423 aa).

Belongs to the thiolase-like superfamily. HMG-CoA synthase family.

It participates in mycotoxin biosynthesis. Its function is as follows. Hydroxymethylglutaryl-CoA synthase-like protein; part of the gene clusters that mediate the biosynthesis of the host-selective toxins (HSTs) AK-toxins responsible for Japanese pear black spot disease by the Japanese pear pathotype. AK-toxins are esters of 9,10-epoxy 8-hydroxy 9-methyldecatrienoic acid (EDA). On cellular level, AK-toxins affect plasma membrane of susceptible cells and cause a sudden increase in loss of K(+) after a few minutes of toxin treatment. The acyl-CoA ligase AKT1, the hydrolase AKT2 and enoyl-CoA hydratase AKT3 are all involved in the biosynthesis of the AK-, AF- and ACT-toxin common 9,10-epoxy-8-hydroxy-9-methyl-decatrienoic acid (EDA) structural moiety. Part of the EDA biosynthesis occurs in the peroxisome since these 3 enzymes are localized in peroxisomes. The exact roles of the 3 enzymes, as well as of additional AK-toxin clusters enzymes, including AKT4, AKT6 and AKTS1, have still to be elucidated. The Cytochrome P450 monooxygenase AKT7 on the other side functions to limit production of EDA and AK-toxin, probably via the catalysis of a side reaction of EDA or its precursor. The sequence is that of Hydroxymethylglutaryl-CoA synthase-like protein AKT4-1 from Alternaria alternata (Alternaria rot fungus).